The following is a 583-amino-acid chain: Epsin-2 (583 aa).

Residues arginine 8, lysine 11, arginine 25, asparagine 30, arginine 63, and histidine 73 each coordinate a 1,2-diacyl-sn-glycero-3-phospho-(1D-myo-inositol-4,5-bisphosphate). The ENTH domain occupies 12 to 144 (NIVNSYSEAE…KDEERLKVER (133 aa)). Polar residues predominate over residues 165–181 (QITFGRGSSQPNLSISH). The disordered stretch occupies residues 165–217 (QITFGRGSSQPNLSISHSEQEYGKAGGSPASYHGSTSPRVSSELEQARPQTSG). Arginine 170 bears the Omega-N-methylarginine mark. Phosphoserine is present on residues serine 173, serine 192, and serine 195. Residues 197–216 (HGSTSPRVSSELEQARPQTS) are compositionally biased toward polar residues. UIM domains lie at 218 to 237 (EEEL…AEQE) and 243 to 262 (GDDL…TVKV). Disordered stretches follow at residues 293-384 (SGPV…KPSP) and 411-457 (TSKK…PESF). 4 tandem repeats follow at residues 301–303 (EPW), 313–315 (NPW), 326–328 (DPW), and 340–342 (DPW). Positions 301–315 (EPWSTGTPANQTNPW) are enriched in polar residues. The segment at 301–377 (EPWSTGTPAN…SDAGKTADAW (77 aa)) is 6 X 3 AA repeats of [DE]-P-W. The span at 346–355 (TTASIQSVPK) shows a compositional bias: polar residues. Tandem repeats lie at residues 358–360 (DPW) and 375–377 (DAW). A Phosphoserine modification is found at serine 431. Over residues 437-448 (SQSLTSASSKPS) the composition is skewed to low complexity. At threonine 453 the chain carries Phosphothreonine. A run of 2 repeats spans residues 482-484 (NPF) and 496-498 (NPF). A 3 X 3 AA repeats of N-P-F region spans residues 482–581 (NPFLAPGAAA…AQPAGTTNPF (100 aa)). Serine 514 carries the post-translational modification Phosphoserine. Repeat 3 spans residues 579-581 (NPF).

This sequence belongs to the epsin family. Binds AP-2 and clathrin. Interacts with ITSN1. Interacts with UBQLN2. Binds EPS15. Ubiquitinated. As to expression, highly expressed in brain. Detected at lower levels in lung, liver, muscle and testis.

It localises to the cytoplasm. Functionally, plays a role in the formation of clathrin-coated invaginations and endocytosis. This chain is Epsin-2 (Epn2), found in Rattus norvegicus (Rat).